The following is a 190-amino-acid chain: MRASRPAVHPVEAAPPPPAAAAEGPEAQVEGAAHPRGVRMKDPPGAPGTPAGLGLRLAQAFFAAAALAVMASTNDFPSVSAFSYLVAAAILQCLWSLLLAFVDIYALLVKRSLRNARAVCIFTIGDGITGTITLGAACASAGITVLIGNDLNICAENHCASFETATALAFISWFALAPSCILNFWSMASR.

2 stretches are compositionally biased toward low complexity: residues 1-12 (MRASRPAVHPVE) and 20-31 (AAAEGPEAQVEG). The disordered stretch occupies residues 1–31 (MRASRPAVHPVEAAPPPPAAAAEGPEAQVEG). At 1 to 50 (MRASRPAVHPVEAAPPPPAAAAEGPEAQVEGAAHPRGVRMKDPPGAPGTP) the chain is on the cytoplasmic side. A helical membrane pass occupies residues 51-71 (AGLGLRLAQAFFAAAALAVMA). The Extracellular portion of the chain corresponds to 72 to 81 (STNDFPSVSA). Residues 82 to 102 (FSYLVAAAILQCLWSLLLAFV) form a helical membrane-spanning segment. Residues 103–126 (DIYALLVKRSLRNARAVCIFTIGD) lie on the Cytoplasmic side of the membrane. A helical membrane pass occupies residues 127–147 (GITGTITLGAACASAGITVLI). The Extracellular portion of the chain corresponds to 148 to 164 (GNDLNICAENHCASFET). A helical membrane pass occupies residues 165 to 185 (ATALAFISWFALAPSCILNFW). Topologically, residues 186–190 (SMASR) are cytoplasmic.

This sequence belongs to the Casparian strip membrane proteins (CASP) family. In terms of assembly, homodimer and heterodimers.

It is found in the cell membrane. The polypeptide is CASP-like protein 5A3 (Zea mays (Maize)).